Reading from the N-terminus, the 283-residue chain is 9,11-endoperoxide prostaglandin H2 reductase (283 aa).

NADP(+) contacts are provided by residues 23–24 (VW) and Asp-48. The active-site Proton donor is the Tyr-53. Substrate is bound at residue His-111. Residues 140–141 (SN), Gln-162, 188–193 (WSPLGS), 234–236 (KST), and 240–244 (RIQEN) each bind NADP(+). Positions 264–283 (NEDKRIGGDPDNFFPGGEEA) are disordered.

It belongs to the aldo/keto reductase family. In terms of assembly, monomer.

It localises to the cytoplasm. The enzyme catalyses prostaglandin F2alpha + NADP(+) = prostaglandin H2 + NADPH + H(+). Its pathway is lipid metabolism; prostaglandin biosynthesis. Functionally, catalyzes the NADP-dependent formation of prostaglandin F2-alpha from prostaglandin H2. Also has aldo/ketoreductase activity towards the synthetic substrates 9,10-phenanthrenequinone and p-nitrobenzaldehyde. This Trypanosoma cruzi (strain CL Brener) protein is 9,11-endoperoxide prostaglandin H2 reductase.